The chain runs to 336 residues: Fructose-1,6-bisphosphatase class 1 (336 aa).

Mg(2+) is bound by residues Glu90, Asp112, Leu114, and Asp115. Substrate contacts are provided by residues 115–118 (DGSS), Asn211, and Lys277. Glu283 contacts Mg(2+).

It belongs to the FBPase class 1 family. In terms of assembly, homotetramer. It depends on Mg(2+) as a cofactor.

The protein resides in the cytoplasm. It carries out the reaction beta-D-fructose 1,6-bisphosphate + H2O = beta-D-fructose 6-phosphate + phosphate. It participates in carbohydrate biosynthesis; gluconeogenesis. In Pseudomonas fluorescens (strain SBW25), this protein is Fructose-1,6-bisphosphatase class 1.